We begin with the raw amino-acid sequence, 369 residues long: NAD(P)H-quinone oxidoreductase subunit 1, chloroplastic (369 aa).

5 consecutive transmembrane segments (helical) span residues 25-45 (FGFI…TIGI), 104-124 (VMVV…HGII), 130-150 (IGVF…LTAG), 270-290 (LSAT…LFLP), and 306-326 (VISI…FLFI).

This sequence belongs to the complex I subunit 1 family. As to quaternary structure, NDH is composed of at least 16 different subunits, 5 of which are encoded in the nucleus.

Its subcellular location is the plastid. The protein localises to the chloroplast thylakoid membrane. It catalyses the reaction a plastoquinone + NADH + (n+1) H(+)(in) = a plastoquinol + NAD(+) + n H(+)(out). It carries out the reaction a plastoquinone + NADPH + (n+1) H(+)(in) = a plastoquinol + NADP(+) + n H(+)(out). Functionally, NDH shuttles electrons from NAD(P)H:plastoquinone, via FMN and iron-sulfur (Fe-S) centers, to quinones in the photosynthetic chain and possibly in a chloroplast respiratory chain. The immediate electron acceptor for the enzyme in this species is believed to be plastoquinone. Couples the redox reaction to proton translocation, and thus conserves the redox energy in a proton gradient. The chain is NAD(P)H-quinone oxidoreductase subunit 1, chloroplastic from Huperzia lucidula (Shining clubmoss).